The following is a 712-amino-acid chain: MEVTLERNLGDKPLRIQTGKLAKQASGSVVVSYGETITLVTVVGSQELRPGIDFVPLSVEYQEKVYAAGRIPGNYFRREIGRPSEKETLTARLIDRPIRPLFPKTWRYETQVIATVLSMDQENDPDMLSMVGASAALCISDLPFFTPIACVRVGRIDGELVANPTISQQENCDLNIIVAGSRDGVVMVEGGGQFISEEEMLDAIYFGQESLEPLLEMQEELMEKAGVPKRSADPVEKDEYLAAKVAELADPEIKKALEINDKLERQDAIRDVKKTVMEGLGEEYEDRGKEVSEFIHDRTRVIMRAMVLDEGRRIGGRRFDEVRPITCEVGILPRTHGSALFTRGETQSLGILTLGSSGDEQRVETLYGDETRPFMLHYNFPPYSVREVKRISGPSRRDIGHGGLSTRAIKEVLPSKEDFDYTIRIVSEILESNGSSSMATVCSASLALMDGGVPITNPVSGIAMGLMAEGDKIVVLSDILGDEDHMGDMDFKVAGTKDGITSVQMDIKISSLTREIMEKALAQARVGRLHILEKMLTTISESREEMSPYAPKVFTIQIHPDKIRDIIGPGGKVIRAIQAETGTRVDVDDSGLVKVSAVNLEEGEAALQMIKDITAVPEVGAVYEGTVVKIMDFGAFVAILPGTEGLCHISQLDTKHVKKVSDVVKEGEKIKVKVLELTKDGKIRLSRKALLEEENGKSGPENGAPQRDKNRH.

Positions 484 and 490 each coordinate Mg(2+). One can recognise a KH domain in the interval 551 to 610; that stretch reads PKVFTIQIHPDKIRDIIGPGGKVIRAIQAETGTRVDVDDSGLVKVSAVNLEEGEAALQMI. An S1 motif domain is found at 620-688; it reads GAVYEGTVVK…KDGKIRLSRK (69 aa). A disordered region spans residues 689–712; that stretch reads ALLEEENGKSGPENGAPQRDKNRH.

This sequence belongs to the polyribonucleotide nucleotidyltransferase family. Requires Mg(2+) as cofactor.

The protein resides in the cytoplasm. The catalysed reaction is RNA(n+1) + phosphate = RNA(n) + a ribonucleoside 5'-diphosphate. In terms of biological role, involved in mRNA degradation. Catalyzes the phosphorolysis of single-stranded polyribonucleotides processively in the 3'- to 5'-direction. This is Polyribonucleotide nucleotidyltransferase from Desulfatibacillum aliphaticivorans.